The following is a 185-amino-acid chain: Hypoxanthine/guanine phosphoribosyltransferase (185 aa).

This sequence belongs to the purine/pyrimidine phosphoribosyltransferase family. Archaeal HPRT subfamily. In terms of assembly, homodimer.

It is found in the cytoplasm. It carries out the reaction IMP + diphosphate = hypoxanthine + 5-phospho-alpha-D-ribose 1-diphosphate. It catalyses the reaction GMP + diphosphate = guanine + 5-phospho-alpha-D-ribose 1-diphosphate. It participates in purine metabolism; IMP biosynthesis via salvage pathway; IMP from hypoxanthine: step 1/1. Catalyzes a salvage reaction resulting in the formation of IMP that is energically less costly than de novo synthesis. In Methanococcus maripaludis (strain C7 / ATCC BAA-1331), this protein is Hypoxanthine/guanine phosphoribosyltransferase.